The primary structure comprises 274 residues: Diaminopimelate epimerase (274 aa).

Residues Asn-11, Gln-44, and Asn-64 each contribute to the substrate site. Cys-73 serves as the catalytic Proton donor. Residues 74-75 (GN), Asn-157, Asn-190, and 208-209 (ER) contribute to the substrate site. The active-site Proton acceptor is Cys-217. Residue 218-219 (GS) participates in substrate binding.

This sequence belongs to the diaminopimelate epimerase family. In terms of assembly, homodimer.

The protein localises to the cytoplasm. It catalyses the reaction (2S,6S)-2,6-diaminopimelate = meso-2,6-diaminopimelate. The protein operates within amino-acid biosynthesis; L-lysine biosynthesis via DAP pathway; DL-2,6-diaminopimelate from LL-2,6-diaminopimelate: step 1/1. Its function is as follows. Catalyzes the stereoinversion of LL-2,6-diaminopimelate (L,L-DAP) to meso-diaminopimelate (meso-DAP), a precursor of L-lysine and an essential component of the bacterial peptidoglycan. The sequence is that of Diaminopimelate epimerase from Haemophilus influenzae (strain PittGG).